Here is a 276-residue protein sequence, read N- to C-terminus: Polyamine aminopropyltransferase (276 aa).

The PABS domain occupies 3–236 (ELWYTEKQTK…GLWTFTIGSK (234 aa)). Position 32 (glutamine 32) interacts with S-methyl-5'-thioadenosine. Histidine 63 and aspartate 87 together coordinate spermidine. Residues aspartate 107 and 138 to 139 (DG) contribute to the S-methyl-5'-thioadenosine site. Residue aspartate 156 is the Proton acceptor of the active site. 156 to 159 (DSTE) serves as a coordination point for spermidine. Residue proline 163 coordinates S-methyl-5'-thioadenosine.

Belongs to the spermidine/spermine synthase family. As to quaternary structure, homodimer or homotetramer.

It localises to the cytoplasm. It catalyses the reaction S-adenosyl 3-(methylsulfanyl)propylamine + putrescine = S-methyl-5'-thioadenosine + spermidine + H(+). It functions in the pathway amine and polyamine biosynthesis; spermidine biosynthesis; spermidine from putrescine: step 1/1. Involved in the cell growth and proliferation. Catalyzes the irreversible transfer of a propylamine group from the amino donor S-adenosylmethioninamine (decarboxy-AdoMet) to putrescine (1,4-diaminobutane) to yield spermidine. This is Polyamine aminopropyltransferase from Bacillus subtilis (strain 168).